A 248-amino-acid chain; its full sequence is PF03932 family protein CutC (248 aa).

The protein belongs to the CutC family. As to quaternary structure, homodimer.

It localises to the cytoplasm. The protein is PF03932 family protein CutC of Escherichia coli O9:H4 (strain HS).